The primary structure comprises 89 residues: MALTVEQKAEILKEHGRKENDTGSPEVQVALLSANINGLQDHFKGHKKDHHSRRGLIRMVNQRRKLLDYLAKKDRTRYLQLIEKLGLRR.

The protein belongs to the universal ribosomal protein uS15 family. In terms of assembly, part of the 30S ribosomal subunit. Forms a bridge to the 50S subunit in the 70S ribosome, contacting the 23S rRNA.

Its function is as follows. One of the primary rRNA binding proteins, it binds directly to 16S rRNA where it helps nucleate assembly of the platform of the 30S subunit by binding and bridging several RNA helices of the 16S rRNA. Forms an intersubunit bridge (bridge B4) with the 23S rRNA of the 50S subunit in the ribosome. This chain is Small ribosomal subunit protein uS15, found in Alcanivorax borkumensis (strain ATCC 700651 / DSM 11573 / NCIMB 13689 / SK2).